A 165-amino-acid polypeptide reads, in one-letter code: Cyanate hydratase (165 aa).

Positions 1 to 20 are disordered; that stretch reads MAQNKANTVSQLQSLKNKSG. Catalysis depends on residues arginine 90, glutamate 93, and serine 116.

This sequence belongs to the cyanase family.

It carries out the reaction cyanate + hydrogencarbonate + 3 H(+) = NH4(+) + 2 CO2. In terms of biological role, catalyzes the reaction of cyanate with bicarbonate to produce ammonia and carbon dioxide. The chain is Cyanate hydratase from Medicago truncatula (Barrel medic).